Here is a 274-residue protein sequence, read N- to C-terminus: Large ribosomal subunit protein uL2 (274 aa).

The disordered stretch occupies residues 222–257 (GVAMNPVDHPHGGGEGRTSGGRHPVSPWGVPTKGYK).

It belongs to the universal ribosomal protein uL2 family. In terms of assembly, part of the 50S ribosomal subunit. Forms a bridge to the 30S subunit in the 70S ribosome.

One of the primary rRNA binding proteins. Required for association of the 30S and 50S subunits to form the 70S ribosome, for tRNA binding and peptide bond formation. It has been suggested to have peptidyltransferase activity; this is somewhat controversial. Makes several contacts with the 16S rRNA in the 70S ribosome. This is Large ribosomal subunit protein uL2 from Nitrosococcus oceani (strain ATCC 19707 / BCRC 17464 / JCM 30415 / NCIMB 11848 / C-107).